The sequence spans 378 residues: Endopolygalacturonase I (378 aa).

A signal peptide spans 1-20; sequence MHLNTTLLVSLALGAASVLA. A propeptide spanning residues 21-39 is cleaved from the precursor; sequence SPAPPAITAPPTAEEIAKR. Cysteine 43 and cysteine 61 are joined by a disulfide. Threonine 44 carries an O-linked (Man...) threonine glycan. Residues serine 46, serine 48, serine 52, serine 53, serine 55, serine 57, and serine 62 are each glycosylated (O-linked (Man...) serine). Threonine 63 carries an O-linked (Man...) threonine glycan. Serine 73 carries O-linked (Man...) serine glycosylation. PbH1 repeat units lie at residues 174 to 204, 205 to 226, 227 to 247, 256 to 277, and 285 to 307; these read SDYLTLKDITIDNSDGDDNGGHNTDAFDIGT, STYVTISGATVYNQDDCVAVNS, GENIYFSGGYCSGGHGLSIGS, VKNVTFVDSTIINSDNGVRIKT, and VSDVTYKDITLTSIAKYGIVVQQ. Aspartate 219 serves as the catalytic Proton donor. An intrachain disulfide couples cysteine 221 to cysteine 237. Histidine 241 is a catalytic residue. The N-linked (GlcNAc...) asparagine glycan is linked to asparagine 258. 2 cysteine pairs are disulfide-bonded: cysteine 345/cysteine 350 and cysteine 369/cysteine 378.

The protein belongs to the glycosyl hydrolase 28 family.

It localises to the secreted. The catalysed reaction is (1,4-alpha-D-galacturonosyl)n+m + H2O = (1,4-alpha-D-galacturonosyl)n + (1,4-alpha-D-galacturonosyl)m.. In terms of biological role, involved in maceration and soft-rotting of plant tissue. Hydrolyzes the 1,4-alpha glycosidic bonds of de-esterified pectate in the smooth region of the plant cell wall. This Aspergillus aculeatus protein is Endopolygalacturonase I (pgaI).